Here is a 401-residue protein sequence, read N- to C-terminus: Voltage-gated potassium channel subunit beta-3 (401 aa).

2 stretches are compositionally biased toward polar residues: residues 1–14 and 32–41; these read MQVS…TLRS and GVSMAQTKQR. A disordered region spans residues 1 to 49; sequence MQVSFACTEQTLRSRTSEDRLCPSRPSGGQNGVSMAQTKQRTPPMGAKN. Positions 90, 91, 97, and 119 each coordinate NADP(+). Residue tyrosine 124 is the Proton donor/acceptor of the active site. Positions 192, 222, 223, 248, 277, 278, 279, 280, 281, 282, 288, 298, 357, 359, 363, 366, and 367 each coordinate NADP(+).

It belongs to the shaker potassium channel beta subunit family. In terms of assembly, forms heteromultimeric complex with alpha subunits. Identified in potassium channel complexes containing KCNA1 and KCNA2.

The protein localises to the cytoplasm. Its function is as follows. Regulatory subunit of the voltage-gated potassium (Kv) channels composed of pore-forming and potassium-conducting alpha subunits and of regulatory beta subunit. The beta-3/KCNAB3 subunit may mediate closure of potassium channels. Increases and accelerates inactivation of Kv1.1/KCNA1 and Kv2.2/KCNA2 subunit-containing channels. May display nicotinamide adenine dinucleotide phosphate (NADPH)-dependent aldoketoreductase activity. The binding of oxidized and reduced NADP(H) cofactors may be required for the regulation of potassium channel activity. The sequence is that of Voltage-gated potassium channel subunit beta-3 (kcnab3) from Xenopus laevis (African clawed frog).